Here is a 228-residue protein sequence, read N- to C-terminus: Mitochondrial assembly of ribosomal large subunit protein 1 (228 aa).

The tract at residues 53-77 (SLTRGLHHGPQPEERTAGDARLQPG) is disordered.

The protein belongs to the Iojap/RsfS family. As to quaternary structure, associates with the mitochondrial ribosome large subunit (39S) via interaction with MRPL12 and/or MRPL14. The interaction generates steric hindrance that is expected to prevent premature association of the 28S and 39S ribosomal subunits. Identified in a complex composed of MALSU1, MIEF1 upstream open reading frame protein and NDUFAB1; within the trimeric complex, MIEF1 upstream open reading frame protein functions as a bridging scaffold that interacts with MALSU1 on one side, and with NDUFAB1 on the other side. Interacts with MRPL12 and MRPL14.

The protein resides in the mitochondrion matrix. Required for normal mitochondrial ribosome function and mitochondrial translation. May play a role in ribosome biogenesis by preventing premature association of the 28S and 39S ribosomal subunits. Interacts with mitochondrial ribosomal protein uL14m (MRPL14), probably blocking formation of intersubunit bridge B8, preventing association of the 28S and 39S ribosomal subunits. Addition to isolated mitochondrial ribosomal subunits partially inhibits translation, probably by interfering with the association of the 28S and 39S ribosomal subunits and the formation of functional ribosomes. May also participate in the assembly and/or regulation of the stability of the large subunit of the mitochondrial ribosome. May function as a ribosomal silencing factor. The polypeptide is Mitochondrial assembly of ribosomal large subunit protein 1 (Malsu1) (Mus musculus (Mouse)).